The chain runs to 62 residues: Large ribosomal subunit protein bL28 (62 aa).

Belongs to the bacterial ribosomal protein bL28 family.

The polypeptide is Large ribosomal subunit protein bL28 (Helicobacter acinonychis (strain Sheeba)).